The chain runs to 561 residues: Putative periplasmic trehalase (561 aa).

The signal sequence occupies residues 1 to 30 (MKSPAPSRPQKMALIPACIFLCFAALSVQA). Residues arginine 148, 155–156 (WD), asparagine 192, 201–203 (RSQ), 273–275 (RPE), and glycine 306 contribute to the substrate site. Residues aspartate 308 and glutamate 492 each act as proton donor/acceptor in the active site. Position 507 (glutamate 507) interacts with substrate. The tract at residues 535-561 (CDNVPATRPLSESTTQPVKQKEAEPTP) is disordered.

It belongs to the glycosyl hydrolase 37 family. Monomer.

It is found in the periplasm. It catalyses the reaction alpha,alpha-trehalose + H2O = alpha-D-glucose + beta-D-glucose. Provides the cells with the ability to utilize trehalose at high osmolarity by splitting it into glucose molecules that can subsequently be taken up by the phosphotransferase-mediated uptake system. This is Putative periplasmic trehalase from Escherichia coli O157:H7.